A 119-amino-acid polypeptide reads, in one-letter code: Protein yippee-like 3 (119 aa).

A Yippee domain is found at 19–116 (RRYSCVHCRA…IELSHMIKDN (98 aa)). Residues Cys-23, Cys-26, Cys-79, and Cys-82 each coordinate Zn(2+).

Belongs to the yippee family.

The protein localises to the nucleus. It is found in the nucleolus. Its function is as follows. May be involved in proliferation and apoptosis in myeloid precursor cells. This chain is Protein yippee-like 3 (ypel3), found in Oryzias latipes (Japanese rice fish).